A 177-amino-acid polypeptide reads, in one-letter code: Peptide methionine sulfoxide reductase MsrA (177 aa).

Residue Cys-15 is part of the active site.

This sequence belongs to the MsrA Met sulfoxide reductase family.

The catalysed reaction is L-methionyl-[protein] + [thioredoxin]-disulfide + H2O = L-methionyl-(S)-S-oxide-[protein] + [thioredoxin]-dithiol. It catalyses the reaction [thioredoxin]-disulfide + L-methionine + H2O = L-methionine (S)-S-oxide + [thioredoxin]-dithiol. In terms of biological role, has an important function as a repair enzyme for proteins that have been inactivated by oxidation. Catalyzes the reversible oxidation-reduction of methionine sulfoxide in proteins to methionine. This chain is Peptide methionine sulfoxide reductase MsrA, found in Mycobacterium leprae (strain Br4923).